Consider the following 124-residue polypeptide: Small ribosomal subunit protein uS12c (124 aa).

2 disordered regions span residues 1–28 and 104–124; these read MPTI…KGCP and ASGV…QPKT. 2 stretches are compositionally biased toward basic residues: residues 11-20 and 109-124; these read ERHKSSKKTK and DRKK…QPKT.

Belongs to the universal ribosomal protein uS12 family. Part of the 30S ribosomal subunit.

The protein resides in the plastid. Its subcellular location is the chloroplast. With S4 and S5 plays an important role in translational accuracy. Located at the interface of the 30S and 50S subunits. The polypeptide is Small ribosomal subunit protein uS12c (rps12) (Gracilaria tenuistipitata var. liui (Red alga)).